Consider the following 360-residue polypeptide: Histidinol-phosphate aminotransferase (360 aa).

K218 is modified (N6-(pyridoxal phosphate)lysine).

Belongs to the class-II pyridoxal-phosphate-dependent aminotransferase family. Histidinol-phosphate aminotransferase subfamily. In terms of assembly, homodimer. Pyridoxal 5'-phosphate serves as cofactor.

The catalysed reaction is L-histidinol phosphate + 2-oxoglutarate = 3-(imidazol-4-yl)-2-oxopropyl phosphate + L-glutamate. Its pathway is amino-acid biosynthesis; L-histidine biosynthesis; L-histidine from 5-phospho-alpha-D-ribose 1-diphosphate: step 7/9. This Pelagibacter ubique (strain HTCC1062) protein is Histidinol-phosphate aminotransferase.